We begin with the raw amino-acid sequence, 756 residues long: 5-methyltetrahydropteroyltriglutamate--homocysteine methyltransferase (756 aa).

5-methyltetrahydropteroyltri-L-glutamate contacts are provided by residues 15-18 (REWK) and lysine 111. The segment at 392 to 411 (GAATSHNLENKKRPQSFNER) is disordered. Over residues 399-411 (LENKKRPQSFNER) the composition is skewed to basic and acidic residues. L-homocysteine contacts are provided by residues 429 to 431 (IGS) and glutamate 482. L-methionine is bound by residues 429 to 431 (IGS) and glutamate 482. Residues 513-514 (RC) and tryptophan 559 each bind 5-methyltetrahydropteroyltri-L-glutamate. An L-homocysteine-binding site is contributed by aspartate 597. Aspartate 597 provides a ligand contact to L-methionine. Residue glutamate 603 participates in 5-methyltetrahydropteroyltri-L-glutamate binding. The Zn(2+) site is built by histidine 639, cysteine 641, and glutamate 663. Histidine 692 functions as the Proton donor in the catalytic mechanism. Cysteine 724 contacts Zn(2+).

It belongs to the vitamin-B12 independent methionine synthase family. The cofactor is Zn(2+).

The catalysed reaction is 5-methyltetrahydropteroyltri-L-glutamate + L-homocysteine = tetrahydropteroyltri-L-glutamate + L-methionine. Its pathway is amino-acid biosynthesis; L-methionine biosynthesis via de novo pathway; L-methionine from L-homocysteine (MetE route): step 1/1. In terms of biological role, catalyzes the transfer of a methyl group from 5-methyltetrahydrofolate to homocysteine resulting in methionine formation. This Halalkalibacterium halodurans (strain ATCC BAA-125 / DSM 18197 / FERM 7344 / JCM 9153 / C-125) (Bacillus halodurans) protein is 5-methyltetrahydropteroyltriglutamate--homocysteine methyltransferase.